A 796-amino-acid polypeptide reads, in one-letter code: Disintegrin and metalloproteinase domain-containing protein B (796 aa).

Positions 1-23 (MKALSCLLAVIATAGSLFQHVDA) are cleaved as a signal peptide. The Extracellular portion of the chain corresponds to 24 to 706 (RSHARDRLNN…VSDWVSRHKP (683 aa)). Residues Asn33, Asn226, Asn313, and Asn407 are each glycosylated (N-linked (GlcNAc...) asparagine). In terms of domain architecture, Peptidase M12B spans 271–510 (RVALIGVVAD…HSILTNCLTT (240 aa)). Intrachain disulfides connect Cys395-Cys495, Cys448-Cys459, and Cys580-Cys600. His431 is a binding site for Zn(2+). Glu432 is an active-site residue. Positions 435 and 441 each coordinate Zn(2+). The Disintegrin domain occupies 519–608 (GQQCGNGIVE…DCPRDTHSKN (90 aa)). The helical transmembrane segment at 707-727 (IVIGVAVGVGCLLLLAILSCI) threads the bilayer. Topologically, residues 728–796 (CGRSKKRRPR…PGRMPSTRYA (69 aa)) are cytoplasmic. Positions 737–796 (RNRKMAPINMRPMPPVYNGWTGPPPNAESPGGHPQYNHVPPPINAPPPAYPGRMPSTRYA) are disordered. A compositionally biased stretch (pro residues) spans 775–786 (VPPPINAPPPAY).

Zn(2+) serves as cofactor.

The protein localises to the membrane. Functionally, probable zinc protease. This Arthroderma otae (strain ATCC MYA-4605 / CBS 113480) (Microsporum canis) protein is Disintegrin and metalloproteinase domain-containing protein B (ADM-B).